The primary structure comprises 310 residues: Aspartate carbamoyltransferase catalytic subunit (310 aa).

Carbamoyl phosphate-binding residues include Arg-55 and Thr-56. Position 85 (Lys-85) interacts with L-aspartate. Carbamoyl phosphate contacts are provided by Arg-106, His-135, and Gln-138. Positions 168 and 230 each coordinate L-aspartate. The carbamoyl phosphate site is built by Leu-268 and Pro-269.

Belongs to the aspartate/ornithine carbamoyltransferase superfamily. ATCase family. As to quaternary structure, heterododecamer (2C3:3R2) of six catalytic PyrB chains organized as two trimers (C3), and six regulatory PyrI chains organized as three dimers (R2).

It catalyses the reaction carbamoyl phosphate + L-aspartate = N-carbamoyl-L-aspartate + phosphate + H(+). The protein operates within pyrimidine metabolism; UMP biosynthesis via de novo pathway; (S)-dihydroorotate from bicarbonate: step 2/3. Its function is as follows. Catalyzes the condensation of carbamoyl phosphate and aspartate to form carbamoyl aspartate and inorganic phosphate, the committed step in the de novo pyrimidine nucleotide biosynthesis pathway. The chain is Aspartate carbamoyltransferase catalytic subunit from Buchnera aphidicola subsp. Acyrthosiphon pisum (strain 5A).